The chain runs to 347 residues: NADH-ubiquinone oxidoreductase chain 2 (347 aa).

A run of 10 helical transmembrane segments spans residues 3-23 (PPIL…VLTS), 25-45 (HWLT…PILM), 60-80 (LLTQ…NLMF), 96-116 (AMVT…FWVP), 149-169 (IDPN…GWGG), 178-198 (ILAY…LYNP), 200-220 (MMLL…MLFM), 237-257 (APLI…LPPL), 274-294 (EMII…YFYM), and 323-343 (MILL…TPLL).

It belongs to the complex I subunit 2 family. In terms of assembly, core subunit of respiratory chain NADH dehydrogenase (Complex I) which is composed of 45 different subunits. Interacts with TMEM242.

Its subcellular location is the mitochondrion inner membrane. It catalyses the reaction a ubiquinone + NADH + 5 H(+)(in) = a ubiquinol + NAD(+) + 4 H(+)(out). Core subunit of the mitochondrial membrane respiratory chain NADH dehydrogenase (Complex I) which catalyzes electron transfer from NADH through the respiratory chain, using ubiquinone as an electron acceptor. Essential for the catalytic activity and assembly of complex I. In Mungos mungo (Banded mongoose), this protein is NADH-ubiquinone oxidoreductase chain 2.